Here is a 432-residue protein sequence, read N- to C-terminus: 3-phosphoshikimate 1-carboxyvinyltransferase (432 aa).

3-phosphoshikimate contacts are provided by K23, S24, and R28. K23 contacts phosphoenolpyruvate. Residues G95 and R123 each contribute to the phosphoenolpyruvate site. Residues S167, Q169, D317, and K344 each contribute to the 3-phosphoshikimate site. Q169 provides a ligand contact to phosphoenolpyruvate. D317 acts as the Proton acceptor in catalysis. R348 and R390 together coordinate phosphoenolpyruvate.

It belongs to the EPSP synthase family. As to quaternary structure, monomer.

The protein resides in the cytoplasm. It carries out the reaction 3-phosphoshikimate + phosphoenolpyruvate = 5-O-(1-carboxyvinyl)-3-phosphoshikimate + phosphate. It participates in metabolic intermediate biosynthesis; chorismate biosynthesis; chorismate from D-erythrose 4-phosphate and phosphoenolpyruvate: step 6/7. Catalyzes the transfer of the enolpyruvyl moiety of phosphoenolpyruvate (PEP) to the 5-hydroxyl of shikimate-3-phosphate (S3P) to produce enolpyruvyl shikimate-3-phosphate and inorganic phosphate. The sequence is that of 3-phosphoshikimate 1-carboxyvinyltransferase from Staphylococcus saprophyticus subsp. saprophyticus (strain ATCC 15305 / DSM 20229 / NCIMB 8711 / NCTC 7292 / S-41).